A 163-amino-acid polypeptide reads, in one-letter code: Choriogonadotropin subunit beta (163 aa).

An N-terminal signal peptide occupies residues 1 to 20 (MEMLQGLLLCLLLSTGGAWA). 6 disulfide bridges follow: Cys29–Cys76, Cys43–Cys91, Cys46–Cys129, Cys54–Cys107, Cys58–Cys109, and Cys112–Cys119. An N-linked (GlcNAc...) asparagine glycan is attached at Asn50. Residue Asn124 is glycosylated (N-linked (GlcNAc...) asparagine). Over residues 135 to 151 (QDSSSNVPPSNLTSPSQ) the composition is skewed to polar residues. Residues 135 to 163 (QDSSSNVPPSNLTSPSQLLEPAVTPLVPQ) are disordered. Ser139 carries an O-linked (GalNAc...) serine glycan. Asn145 carries an N-linked (GlcNAc...) asparagine glycan. Ser150 is a glycosylation site (O-linked (GalNAc...) serine).

The protein belongs to the glycoprotein hormones subunit beta family. Heterodimer of a common alpha chain and a unique beta chain which confers biological specificity to thyrotropin, lutropin, follitropin and gonadotropin.

It is found in the secreted. In terms of biological role, stimulates the ovaries to synthesize the steroids that are essential for the maintenance of pregnancy. This is Choriogonadotropin subunit beta (CGB) from Saimiri boliviensis boliviensis (Bolivian squirrel monkey).